A 211-amino-acid polypeptide reads, in one-letter code: UPF0637 protein BLi01683/BL05149 (211 aa).

The protein belongs to the UPF0637 family.

This Bacillus licheniformis (strain ATCC 14580 / DSM 13 / JCM 2505 / CCUG 7422 / NBRC 12200 / NCIMB 9375 / NCTC 10341 / NRRL NRS-1264 / Gibson 46) protein is UPF0637 protein BLi01683/BL05149.